The following is a 1489-amino-acid chain: WD repeat-containing protein 7 (1489 aa).

WD repeat units lie at residues 17–56 (APTHCISSILLTDDGGTIVTGCHDGQICLWDVSVELEVNP), 62–104 (GHTA…CIEF), 156–199 (ISPD…SGMQ), 324–366 (VICP…EKQE), 404–443 (NEPLKVTASVYIPAHGRLVCGREDGSIIIVPATQTAIVQL), 462–507 (GHRN…MKHI), and 558–597 (RHLFPIQVIKWRPSDDYLVVGCTDGSVYVWQMDTGALDRC). Disordered regions lie at residues 754–783 (IKEHLLDEEEDEEEARRQSREDSDPEYRAS) and 911–947 (GDHMKKGPTRPPRPGTPDLSKARDSPPPSSNIVQGQI). Positions 767–782 (EARRQSREDSDPEYRA) are enriched in basic and acidic residues. Position 935 is a phosphoserine (serine 935). 2 WD repeats span residues 1350-1389 (PAICRFYMVSYYERSHRIAVGARHGSVALYDIRTGKCQTI) and 1391-1431 (GHKG…LGSI). Position 1455 is a phosphoserine (serine 1455).

The protein is WD repeat-containing protein 7 (Wdr7) of Mus musculus (Mouse).